A 213-amino-acid polypeptide reads, in one-letter code: Pyrrolidone-carboxylate peptidase (213 aa).

Residues glutamate 78, cysteine 141, and histidine 165 contribute to the active site.

This sequence belongs to the peptidase C15 family. In terms of assembly, homotetramer.

Its subcellular location is the cytoplasm. It carries out the reaction Release of an N-terminal pyroglutamyl group from a polypeptide, the second amino acid generally not being Pro.. Functionally, removes 5-oxoproline from various penultimate amino acid residues except L-proline. This is Pyrrolidone-carboxylate peptidase from Staphylococcus saprophyticus subsp. saprophyticus (strain ATCC 15305 / DSM 20229 / NCIMB 8711 / NCTC 7292 / S-41).